We begin with the raw amino-acid sequence, 58 residues long: Metallothionein (58 aa).

The segment at 1–29 (MPGPCCNDVCECAAGGCKTGCVCTSCRCS) is beta. Positions 5, 6, 10, 12, 17, 21, 23, 26, 28, 31, 34, 38, 40, 46, 50, 54, 56, and 57 each coordinate a divalent metal cation. Residues 30 to 58 (PCDKCTSGCKCPSKEECAKTCSKPCECCP) are alpha.

Functionally, metallothioneins have a high content of cysteine residues that bind various heavy metals. Class I MTS in crustacea are involved in the sequestration of elevated levels of heavy-metal ions. The polypeptide is Metallothionein (Astacus astacus (Noble crayfish)).